A 180-amino-acid polypeptide reads, in one-letter code: Hypoxanthine-guanine phosphoribosyltransferase (180 aa).

Lys-43 and Gly-44 together coordinate diphosphate. Positions 99 and 100 each coordinate Mg(2+). The Proton acceptor role is filled by Asp-103. GMP is bound by residues Lys-131, 152 to 153 (FI), and Asp-159. Arg-165 is a diphosphate binding site.

This sequence belongs to the purine/pyrimidine phosphoribosyltransferase family. Mg(2+) serves as cofactor.

It is found in the cytoplasm. It carries out the reaction IMP + diphosphate = hypoxanthine + 5-phospho-alpha-D-ribose 1-diphosphate. It catalyses the reaction GMP + diphosphate = guanine + 5-phospho-alpha-D-ribose 1-diphosphate. Its pathway is purine metabolism; IMP biosynthesis via salvage pathway; IMP from hypoxanthine: step 1/1. The protein operates within purine metabolism; GMP biosynthesis via salvage pathway; GMP from guanine: step 1/1. Functionally, purine salvage pathway enzyme that catalyzes the transfer of the ribosyl-5-phosphate group from 5-phospho-alpha-D-ribose 1-diphosphate (PRPP) to the N9 position of the 6-oxopurines hypoxanthine and guanine to form the corresponding ribonucleotides IMP (inosine 5'-monophosphate) and GMP (guanosine 5'-monophosphate), with the release of PPi. The sequence is that of Hypoxanthine-guanine phosphoribosyltransferase (hpt) from Streptococcus mutans serotype c (strain ATCC 700610 / UA159).